The primary structure comprises 305 residues: Ribonuclease BN (305 aa).

Zn(2+) contacts are provided by histidine 64, histidine 66, aspartate 68, histidine 69, histidine 141, aspartate 212, and histidine 270. Aspartate 68 acts as the Proton acceptor in catalysis.

The protein belongs to the RNase Z family. RNase BN subfamily. As to quaternary structure, homodimer. Zn(2+) serves as cofactor.

Zinc phosphodiesterase, which has both exoribonuclease and endoribonuclease activities. This Escherichia coli O6:K15:H31 (strain 536 / UPEC) protein is Ribonuclease BN.